The following is a 361-amino-acid chain: uncharacterized protein (361 aa).

An N-terminal signal peptide occupies residues 1 to 17 (MNLFIYVLLLSIWTSSC). At 18–47 (LDRNESNGSATAVTTHAEFKQTKLQELRRR) the chain is on the extracellular side. Asparagine 24 carries N-linked (GlcNAc...) asparagine glycosylation. A helical transmembrane segment spans residues 48–68 (LLIIVIGTLITGYMVSCTCLL). Topologically, residues 69–361 (HYSCDSEEAH…EDIYKNSRNN (293 aa)) are cytoplasmic. Polar residues predominate over residues 95-106 (SSKISFTDSKSP). The segment at 95 to 197 (SSKISFTDSK…SQVSPSYPEK (103 aa)) is disordered. Over residues 144–158 (PSSQKKPSKPSAPKK) the composition is skewed to low complexity. Basic residues predominate over residues 169–185 (HRTRSPKKAHRQAHAHK).

It is found in the membrane. This is an uncharacterized protein from Bos taurus (Bovine).